Here is a 416-residue protein sequence, read N- to C-terminus: Nuclear hormone receptor family member nhr-59 (416 aa).

The nuclear receptor DNA-binding region spans 17 to 94 (QTFCQVCGQE…IGMDIQNFQF (78 aa)). 2 NR C4-type zinc fingers span residues 20-40 (CQVC…CRAC) and 57-82 (CKDG…LKKC). Residues 162-415 (TRLQKLSSSL…FSHPELVKDV (254 aa)) form the NR LBD domain.

Belongs to the nuclear hormone receptor family.

Its subcellular location is the nucleus. Its function is as follows. Orphan nuclear receptor. The protein is Nuclear hormone receptor family member nhr-59 of Caenorhabditis elegans.